We begin with the raw amino-acid sequence, 202 residues long: HTH-type transcriptional regulator BetI (202 aa).

The 61-residue stretch at 8 to 68 folds into the HTH tetR-type domain; the sequence is PIRRRQLIDA…ATMRDITRQL (61 aa). Residues 31–50 constitute a DNA-binding region (H-T-H motif); it reads TIAQIARRAGVSAGIISHYF.

It functions in the pathway amine and polyamine biosynthesis; betaine biosynthesis via choline pathway [regulation]. Repressor involved in the biosynthesis of the osmoprotectant glycine betaine. It represses transcription of the choline transporter BetT and the genes of BetAB involved in the synthesis of glycine betaine. This chain is HTH-type transcriptional regulator BetI, found in Cronobacter sakazakii (strain ATCC BAA-894) (Enterobacter sakazakii).